We begin with the raw amino-acid sequence, 449 residues long: Na(+)/H(+) antiporter NhaA 1 (449 aa).

11 consecutive transmembrane segments (helical) span residues 38–58, 79–99, 117–137, 145–165, 175–195, 198–218, 240–260, 311–331, 347–367, 390–410, and 422–442; these read GILL…PWAA, FTIR…VVGM, VLPL…YAAF, AGWA…LTLV, VFLT…IALF, SGLH…LACL, MHHG…FMPA, FVHL…ALAN, PLPL…IFLF, GVAV…GLAF, and LGIL…LRFV.

The protein belongs to the NhaA Na(+)/H(+) (TC 2.A.33) antiporter family.

The protein resides in the cell inner membrane. It carries out the reaction Na(+)(in) + 2 H(+)(out) = Na(+)(out) + 2 H(+)(in). In terms of biological role, na(+)/H(+) antiporter that extrudes sodium in exchange for external protons. The chain is Na(+)/H(+) antiporter NhaA 1 from Myxococcus xanthus (strain DK1622).